The following is a 303-amino-acid chain: Quinolinate synthase (303 aa).

The iminosuccinate site is built by His24 and Ser41. Cys86 serves as a coordination point for [4Fe-4S] cluster. Iminosuccinate is bound by residues 112 to 114 (YVN) and Ser129. Cys172 serves as a coordination point for [4Fe-4S] cluster. Iminosuccinate-binding positions include 198 to 200 (HPE) and Thr215. Cys260 is a binding site for [4Fe-4S] cluster.

This sequence belongs to the quinolinate synthase family. Type 2 subfamily. Requires [4Fe-4S] cluster as cofactor.

It is found in the cytoplasm. It carries out the reaction iminosuccinate + dihydroxyacetone phosphate = quinolinate + phosphate + 2 H2O + H(+). It functions in the pathway cofactor biosynthesis; NAD(+) biosynthesis; quinolinate from iminoaspartate: step 1/1. Its function is as follows. Catalyzes the condensation of iminoaspartate with dihydroxyacetone phosphate to form quinolinate. This is Quinolinate synthase from Alkaliphilus metalliredigens (strain QYMF).